A 1296-amino-acid chain; its full sequence is Protein ORF75 (1296 aa).

The protein resides in the virion tegument. The chain is Protein ORF75 (ORF75) from Homo sapiens (Human).